Reading from the N-terminus, the 398-residue chain is Stabilizer of axonemal microtubules 2 (398 aa).

6 mn regions span residues 114 to 126 (STTF…PQEI), 148 to 162 (ITSH…QLEL), 248 to 260 (NSTS…PYQA), 282 to 296 (KSIM…ESCR), 316 to 328 (LSTF…PHEL), and 350 to 364 (VTMY…RQEI).

It belongs to the FAM154 family.

This Homo sapiens (Human) protein is Stabilizer of axonemal microtubules 2 (SAXO2).